We begin with the raw amino-acid sequence, 305 residues long: N-acetylmuramic acid 6-phosphate etherase (305 aa).

Residues 54 to 217 (AVPQLERGGR…SSALMVRLGK (164 aa)) enclose the SIS domain. Residue glutamate 82 is the Proton donor of the active site. Glutamate 113 is a catalytic residue.

The protein belongs to the GCKR-like family. MurNAc-6-P etherase subfamily. Homodimer.

The enzyme catalyses N-acetyl-D-muramate 6-phosphate + H2O = N-acetyl-D-glucosamine 6-phosphate + (R)-lactate. It participates in amino-sugar metabolism; N-acetylmuramate degradation. In terms of biological role, specifically catalyzes the cleavage of the D-lactyl ether substituent of MurNAc 6-phosphate, producing GlcNAc 6-phosphate and D-lactate. The polypeptide is N-acetylmuramic acid 6-phosphate etherase (Deinococcus radiodurans (strain ATCC 13939 / DSM 20539 / JCM 16871 / CCUG 27074 / LMG 4051 / NBRC 15346 / NCIMB 9279 / VKM B-1422 / R1)).